The chain runs to 174 residues: RNA pyrophosphohydrolase (174 aa).

Positions 6–149 (GFRANVGIII…KRDVYRKVMK (144 aa)) constitute a Nudix hydrolase domain. The short motif at 38–59 (GGVDDGESAEEAMYRELYEEVG) is the Nudix box element.

This sequence belongs to the Nudix hydrolase family. RppH subfamily. Requires a divalent metal cation as cofactor.

Accelerates the degradation of transcripts by removing pyrophosphate from the 5'-end of triphosphorylated RNA, leading to a more labile monophosphorylated state that can stimulate subsequent ribonuclease cleavage. This Shewanella sp. (strain ANA-3) protein is RNA pyrophosphohydrolase.